We begin with the raw amino-acid sequence, 283 residues long: NifU-like protein 4, mitochondrial (283 aa).

Residues 1–48 (MKGIARLVTSLSRIGGRKVVSGTSTVTSSSSSSLLLSRRSLFISATNL) constitute a mitochondrion transit peptide.

It belongs to the NifU family. Predominantly expressed in roots.

Its subcellular location is the mitochondrion. Functionally, molecular scaffold for [Fe-S] cluster assembly of mitochondrial iron-sulfur proteins. The polypeptide is NifU-like protein 4, mitochondrial (NIFU4) (Arabidopsis thaliana (Mouse-ear cress)).